Here is an 84-residue protein sequence, read N- to C-terminus: Large ribosomal subunit protein uL29 (84 aa).

Belongs to the universal ribosomal protein uL29 family.

This chain is Large ribosomal subunit protein uL29, found in Mycoplasma mobile (strain ATCC 43663 / 163K / NCTC 11711) (Mesomycoplasma mobile).